A 183-amino-acid chain; its full sequence is Disulfide bond formation protein B 2 (183 aa).

At 1–9 the chain is on the cytoplasmic side; the sequence is MSLACSRSL. Residues 10–26 form a helical membrane-spanning segment; it reads FFMAFTAGILALGASYY. At 27 to 44 the chain is on the periplasmic side; that stretch reads LEYAVGLVPCSLCLVQRL. A disulfide bond links C36 and C39. A helical membrane pass occupies residues 45–61; that stretch reads FMSVLTLCCGLAAVHGP. Residues 62 to 68 are Cytoplasmic-facing; the sequence is QRVGLSL. Residues 69–85 form a helical membrane-spanning segment; that stretch reads YWMVTLLSSLGGTTAAW. Residues 86–142 lie on the Periplasmic side of the membrane; the sequence is RQVLFQSDSLQELAHCAPNPEEMFSSLPWLCALMRMFNDTADCAELSWTLFDLSIPE. An intrachain disulfide couples C101 to C128. The helical transmembrane segment at 143 to 161 threads the bilayer; it reads WSLLFFVGMSILAVYQLLR. Residues 162–183 are Cytoplasmic-facing; it reads QVWMALQRPLSGQPSHPALVRD.

The protein belongs to the DsbB family.

The protein resides in the cell inner membrane. Its function is as follows. Required for disulfide bond formation in some periplasmic proteins. Acts by oxidizing the DsbA protein. The sequence is that of Disulfide bond formation protein B 2 from Pseudomonas fluorescens (strain Pf0-1).